We begin with the raw amino-acid sequence, 456 residues long: MKKYDRGWASLETGAALLIVMLLIAWGAGIWQDYIQTKGWQTEARLVSNWTSAARSYIGKNYTTLQGSSTTTTPAVITTTMLKNTGFLSSGFTETNSEGQRLQAYVVRNAQNPELLQAMVVSSGGTPYPVKALIQMAKDITTGLGGYIQDGKTATGALRSWSVALSNYGAKSGNGHIAVLLSTDELSGAAEDTDRLYRFQVNGRPDLNKMHTAIDMGSNNLNNVGAVNAQTGNFSGNVNGVNGTFSGQVKGNSGNFDVNVTAGGDIRSNNGWLITRNSKGWLNETHGGGFYMSDGSWVRSVNNKGIYTGGQVKGGTVRADGRLYTGEYLQLERTAVAGASCSPNGLVGRDNTGAILSCQSGTWRKSNSGSTVITGRIANGQQIPLPTGFSASQCSWSVSNAENPQGWKPNYFAGSVATYDANRIVKCGFYDEYNFHKGTFRADLTGKCSYVVACQN.

The tract at residues 1-361 (MKKYDRGWAS…TGAILSCQSG (361 aa)) is constant region. The interval 362-456 (TWRKSNSGST…KCSYVVACQN (95 aa)) is variable region.

This chain is Shufflon protein D', found in Escherichia coli.